The sequence spans 167 residues: Leptin (167 aa).

A signal peptide spans 1–21 (MCWRPLCRFLWLWSYLSYVQA). Cys117 and Cys167 are disulfide-bonded.

The protein belongs to the leptin family.

The protein resides in the secreted. Functionally, key player in the regulation of energy balance and body weight control. Once released into the circulation, has central and peripheral effects by binding LEPR, found in many tissues, which results in the activation of several major signaling pathways. In the hypothalamus, acts as an appetite-regulating factor that induces a decrease in food intake and an increase in energy consumption by inducing anorexinogenic factors and suppressing orexigenic neuropeptides, also regulates bone mass and secretion of hypothalamo-pituitary-adrenal hormones. In the periphery, increases basal metabolism, influences reproductive function, regulates pancreatic beta-cell function and insulin secretion, is pro-angiogenic for endothelial cell and affects innate and adaptive immunity. In the arcuate nucleus of the hypothalamus, activates by depolarization POMC neurons inducing FOS and SOCS3 expression to release anorexigenic peptides and inhibits by hyperpolarization NPY neurons inducing SOCS3 with a consequent reduction on release of orexigenic peptides. In addition to its known satiety inducing effect, has a modulatory role in nutrient absorption. In the intestine, reduces glucose absorption by enterocytes by activating PKC and leading to a sequential activation of p38, PI3K and ERK signaling pathways which exerts an inhibitory effect on glucose absorption. Acts as a growth factor on certain tissues, through the activation of different signaling pathways increases expression of genes involved in cell cycle regulation such as CCND1, via JAK2-STAT3 pathway, or VEGFA, via MAPK1/3 and PI3K-AKT1 pathways. May also play an apoptotic role via JAK2-STAT3 pathway and up-regulation of BIRC5 expression. Pro-angiogenic, has mitogenic activity on vascular endothelial cells and plays a role in matrix remodeling by regulating the expression of matrix metalloproteinases (MMPs) and tissue inhibitors of metalloproteinases (TIMPs). In innate immunity, modulates the activity and function of neutrophils by increasing chemotaxis and the secretion of oxygen radicals. Increases phagocytosis by macrophages and enhances secretion of pro-inflammatory mediators. Increases cytotoxic ability of NK cells. Plays a pro-inflammatory role, in synergy with IL1B, by inducing NOS2 which promotes the production of IL6, IL8 and Prostaglandin E2, through a signaling pathway that involves JAK2, PI3K, MAP2K1/MEK1 and MAPK14/p38. In adaptive immunity, promotes the switch of memory T-cells towards T helper-1 cell immune responses. Increases CD4(+)CD25(-) T-cell proliferation and reduces autophagy during TCR (T-cell receptor) stimulation, through MTOR signaling pathway activation and BCL2 up-regulation. This is Leptin (Lep) from Rattus norvegicus (Rat).